We begin with the raw amino-acid sequence, 501 residues long: MTVQSIMFQGTASDAGKSWLAAAVCRILANRGQKVAPFKSQNMALNSFITEKGDEMGRAQVFQAEAAKVKPDVRMNPILLKPSTDKDSQVIVMGKVLKNMDAVSYYQFKRELIPQIMMAYNTLADENDVIVLEGAGSPAEINLNENDIVNMGMARMADAPVILVADIDKGGVFASIYGTIKLMPREDQQRIKGIIINKFRGDKSLLESGNKMIEKLTGIPVIGVLPMSSIDIDEEDSVSLIRKPRQKDTQKDLDVAVIDLDKISNFTDIHSLEIQPDVSVRYVLTAEELGTPDLLIIPGSKNTNADLVALRKNGIAEGILRAHKDGSMIVGICGGYQILGQMLYDPTGIESPIKEQKGLGLLDTETTFNEKKTTTQAVAKRNNYILKGYEIHMGTTKRGLNSTPFSTIQETNGQPENREDGAVSTDGTVIGTYLHGIFDNPYWTRHLLNQLRVAKGMAPLVDTTVSISGYKDQQYEKLAQLFAQNVDMDKFNQILQDSTKE.

A GATase cobBQ-type domain is found at 252 to 443 (DLDVAVIDLD…LHGIFDNPYW (192 aa)). Cysteine 333 serves as the catalytic Nucleophile. Residue histidine 435 is part of the active site.

Belongs to the CobB/CobQ family. CobQ subfamily.

The protein operates within cofactor biosynthesis; adenosylcobalamin biosynthesis. Catalyzes amidations at positions B, D, E, and G on adenosylcobyrinic A,C-diamide. NH(2) groups are provided by glutamine, and one molecule of ATP is hydrogenolyzed for each amidation. The protein is Cobyric acid synthase of Limosilactobacillus reuteri (strain DSM 20016) (Lactobacillus reuteri).